A 643-amino-acid polypeptide reads, in one-letter code: uncharacterized protein (643 aa).

Residues 179-199 (FKSSQLQQSPSPNKKSPSYSQ) are compositionally biased toward low complexity. 2 disordered regions span residues 179–200 (FKSSQLQQSPSPNKKSPSYSQV) and 349–377 (KRSNSIDRAGIRSRRRSHSSPERSTSTEN).

This is an uncharacterized protein from Caenorhabditis elegans.